The following is a 319-amino-acid chain: Glycine--tRNA ligase alpha subunit (319 aa).

Residues R290–G319 form a disordered region. Positions G307–G319 are enriched in basic and acidic residues.

Belongs to the class-II aminoacyl-tRNA synthetase family. As to quaternary structure, tetramer of two alpha and two beta subunits.

It localises to the cytoplasm. The catalysed reaction is tRNA(Gly) + glycine + ATP = glycyl-tRNA(Gly) + AMP + diphosphate. The sequence is that of Glycine--tRNA ligase alpha subunit from Moorella thermoacetica (strain ATCC 39073 / JCM 9320).